The chain runs to 177 residues: MITIDLAFSPASADLIDAADDEGTRSRLQEAGDWECELSAWIEALRQDHGNHCPEVVRTCDSLSLGISLLDDASIAELNLHWRQKPTPTDVLSFAALESEMPMVAGQELELGDIVVSVPTARRQALEQKHGLERELRWLVSHGLLHLLSWDHPDEDALAAMLQKQEHLLGMGSNVRS.

Zn(2+) contacts are provided by H142, H146, and H152.

It belongs to the endoribonuclease YbeY family. Zn(2+) serves as cofactor.

It is found in the cytoplasm. Functionally, single strand-specific metallo-endoribonuclease involved in late-stage 70S ribosome quality control and in maturation of the 3' terminus of the 16S rRNA. This Synechococcus sp. (strain CC9311) protein is Endoribonuclease YbeY.